Reading from the N-terminus, the 649-residue chain is Acetylcholinesterase (649 aa).

The first 38 residues, 1-38, serve as a signal peptide directing secretion; that stretch reads MAISCRQSRVLPMSLPLPLTIPLPLVLVLSLHLSGVCG. Cys-104 and Cys-131 are disulfide-bonded. N-linked (GlcNAc...) asparagine glycans are attached at residues Asn-126 and Asn-174. The active-site Acyl-ester intermediate is the Ser-276. A disulfide bridge connects residues Cys-330 and Cys-345. Asn-331 carries N-linked (GlcNAc...) asparagine glycosylation. Residues Glu-405 and His-518 each act as charge relay system in the active site. Cys-480 and Cys-598 are disulfide-bonded. Asn-531 carries N-linked (GlcNAc...) asparagine glycosylation. A lipid anchor (GPI-anchor amidated serine) is attached at Ser-619. The propeptide at 620-649 is removed in mature form; that stretch reads GSASISPRLQLLGIAALIYICAALRTKRVF.

The protein belongs to the type-B carboxylesterase/lipase family. As to quaternary structure, homodimer; disulfide-linked. The active unit is formed by non-covalent association of the 55 kDa and 16 kDa subunits. In terms of processing, proteolytic cleavage into the 16 kDa subunit and the 55 kDa subunits originates from the hydrophilic peptide, aa 148-180, and is associated with excretion out of the cell. Post-translationally, neither N-glycosylation nor dimerization is required for enzyme activity or substrate specificity, but protects the protein against proteolytic digestion.

It is found in the synapse. Its subcellular location is the cell membrane. The catalysed reaction is acetylcholine + H2O = choline + acetate + H(+). In terms of biological role, rapidly hydrolyzes choline released into the synapse. It can hydrolyze butyrylthiocholine. This is Acetylcholinesterase (Ace) from Drosophila melanogaster (Fruit fly).